The sequence spans 491 residues: Alpha-2-antiplasmin (491 aa).

The signal sequence occupies residues Met1–Ala27. Positions Val28 to Gln39 are excised as a propeptide. Cys70 and Cys143 are joined by a disulfide. N-linked (GlcNAc...) asparagine glycans are attached at residues Asn126, Asn295, Asn309, and Asn316. A disordered region spans residues Ser439 to Lys491. Tyr484 carries the sulfotyrosine modification.

The protein belongs to the serpin family. Forms protease inhibiting heterodimer with TMPRSS7. Post-translationally, proteolytically cleaved at Pro-35 by both the prolyl endopeptidase FAP form and antiplasmin-cleaving enzyme FAP soluble form to generate mature alpha-2-antiplasmin. Expressed by the liver and secreted in plasma.

It is found in the secreted. Its function is as follows. Serine protease inhibitor. The major targets of this inhibitor are plasmin and trypsin, but it also inactivates matriptase-3/TMPRSS7 and chymotrypsin. The chain is Alpha-2-antiplasmin (Serpinf2) from Mus musculus (Mouse).